The primary structure comprises 319 residues: MTHSPVVIIGSGPAAHTAAIYLSRAEIKPTLYEGMMANGIAAGGQLTTTTEIENFPGFPDGIMGSQLMEDMRKQSIRFGTEIITETVSKVDLSQRPFKYWTEFNEDEEPHTADAIILATGASAKRLSLPGEDQYWQQGISACAVCDGAVPIFRNKPLAVVGGGDSAAEEALFLTKYGSKVYVIVRKDKLRASAVMAKRLASHPKVEILFNHVSIEAKGDGKLLNALEIENTLTGEKRDLEVNGLFYAIGHIPATSIVKGQVETDEEGYVVTVPGTANTSVKGVFAAGDVQDKRYRQAITSAGTGCMAALDCEKLLAEEE.

Residues 11–14 (SGPA), 40–41 (IA), Gln45, Asn54, Val87, Cys145, Asp288, and 295–297 (RQA) contribute to the FAD site. Residues Cys142 and Cys145 are joined by a disulfide bond.

This sequence belongs to the class-II pyridine nucleotide-disulfide oxidoreductase family. Homodimer. Requires FAD as cofactor.

The protein resides in the cytoplasm. The catalysed reaction is [thioredoxin]-dithiol + NADP(+) = [thioredoxin]-disulfide + NADPH + H(+). This Yarrowia lipolytica (strain CLIB 122 / E 150) (Yeast) protein is Thioredoxin reductase (TRR1).